A 45-amino-acid polypeptide reads, in one-letter code: Iota-conotoxin-like R11.13 (45 aa).

4 disulfide bridges follow: Cys5–Cys19, Cys12–Cys22, Cys18–Cys27, and Cys21–Cys36. Residue Leu43 is modified to D-leucine. Residue Arg45 is a propeptide, removed by a carboxypeptidase.

This sequence belongs to the conotoxin I1 superfamily. In terms of tissue distribution, expressed by the venom duct.

The protein resides in the secreted. Functionally, iota-conotoxins bind to voltage-gated sodium channels (Nav) and act as agonists by shifting the voltage-dependence of activation to more hyperpolarized levels. Produces general excitatory symptoms. The chain is Iota-conotoxin-like R11.13 from Conus radiatus (Rayed cone).